The primary structure comprises 89 residues: Small ribosomal subunit protein uS15 (89 aa).

It belongs to the universal ribosomal protein uS15 family. Part of the 30S ribosomal subunit. Forms a bridge to the 50S subunit in the 70S ribosome, contacting the 23S rRNA.

Its function is as follows. One of the primary rRNA binding proteins, it binds directly to 16S rRNA where it helps nucleate assembly of the platform of the 30S subunit by binding and bridging several RNA helices of the 16S rRNA. Forms an intersubunit bridge (bridge B4) with the 23S rRNA of the 50S subunit in the ribosome. The chain is Small ribosomal subunit protein uS15 from Micrococcus luteus (strain ATCC 4698 / DSM 20030 / JCM 1464 / CCM 169 / CCUG 5858 / IAM 1056 / NBRC 3333 / NCIMB 9278 / NCTC 2665 / VKM Ac-2230) (Micrococcus lysodeikticus).